A 492-amino-acid chain; its full sequence is Sestrin-3 (492 aa).

Positions 62–243 (LVEEYSTSGR…VCDLANDNSI (182 aa)) are N-terminal domain; may mediate the alkylhydroperoxide reductase activity. Cysteine 121 (cysteine sulfenic acid (-SOH) intermediate) is an active-site residue. A C-terminal domain; mediates TORC1 regulation region spans residues 310–492 (PHSDFEDDVI…ALRAITRHLT (183 aa)). L-leucine is bound by residues 386–389 (TYNT), threonine 398, and glutamate 463.

The protein belongs to the sestrin family. As to quaternary structure, interacts with the GATOR2 complex which is composed of MIOS, SEC13, SEH1L, WDR24 and WDR59; the interaction is not regulated by leucine. Interacts with RRAGA, RRAGB, RRAGC and RRAGD; may function as a guanine nucleotide dissociation inhibitor for RRAGs and regulate them. Interacts with the TORC2 complex; through RICTOR. Detected in liver and skeletal muscles.

The protein localises to the cytoplasm. It catalyses the reaction a hydroperoxide + L-cysteinyl-[protein] = S-hydroxy-L-cysteinyl-[protein] + an alcohol. Its function is as follows. May function as an intracellular leucine sensor that negatively regulates the TORC1 signaling pathway. May also regulate the insulin-receptor signaling pathway through activation of TORC2. This metabolic regulator may also play a role in protection against oxidative and genotoxic stresses. May prevent the accumulation of reactive oxygen species (ROS) through the alkylhydroperoxide reductase activity born by the N-terminal domain of the protein. The protein is Sestrin-3 of Mus musculus (Mouse).